A 142-amino-acid polypeptide reads, in one-letter code: Small ribosomal subunit protein uS8c (142 aa).

Belongs to the universal ribosomal protein uS8 family. In terms of assembly, part of the 30S ribosomal subunit.

Its subcellular location is the plastid. One of the primary rRNA binding proteins, it binds directly to 16S rRNA central domain where it helps coordinate assembly of the platform of the 30S subunit. This Euglena longa (Euglenophycean alga) protein is Small ribosomal subunit protein uS8c (rps8).